Here is a 571-residue protein sequence, read N- to C-terminus: MSTDELLTFDHVDIRFPIELNKQGSCSLNLTNKTDNYVAFKAQTTKPKMYCVKPSVGVVLPRSSCEVLVVMQALKEAPADRQCKDKLLFQCKVVEPGTMDKEVTSEMFSKEAGHRVEETIFKIIYVAPPQPQSPVQEGLEDGSSPSASVSDKGNASEVFVGPSVGIVDLIRMSDELLIIDPVDVQFPIELNKKVSCSLNLTNKTENYVAFKAKTTNAKKYYVRPNVGVVLPRSSCEVLVIMQALKEAPADMQCRDKLLFQCKVVEPETTAKDVTSEMFSKEAGHPAEETRLKVMYVTPPQPPSPVQEGTEEGSSPRASVSDNGNASEAFVDMLRSLLVPLFSNAASSTDDHGITLPQYQVFINFRGDELRNSFVGFLVKAMRLEKINVFTDEVELRGTNLNYLFRRIEESRVAVAIFSERYTESCWCLDELVKMKEQMEQGKLVVVPVFYRLNATACKRFMGAFGDNLRNLEWEYRSEPERIQKWKEALSSVFSNIGLTSDIRRYNLINKNMDHTSEFLYIVLILNFFSEISDMTGLTTSYQFLLMMKSNLISYDIYIYPTKFCVNVFIGV.

An MSP 1 domain is found at 1-126; that stretch reads MSTDELLTFD…EETIFKIIYV (126 aa). The segment at 132-154 is disordered; sequence QSPVQEGLEDGSSPSASVSDKGN. The span at 143–153 shows a compositional bias: polar residues; sequence SSPSASVSDKG. In terms of domain architecture, MSP 2 spans 176 to 296; it reads LLIIDPVDVQ…EETRLKVMYV (121 aa). Residues 297-322 are disordered; it reads TPPQPPSPVQEGTEEGSSPRASVSDN. The segment covering 311-322 has biased composition (polar residues); the sequence is EGSSPRASVSDN. The TIR domain occupies 356-493; it reads PQYQVFINFR…KWKEALSSVF (138 aa). The active site involves glutamate 430.

This sequence belongs to the VAMP-associated protein (VAP) (TC 9.B.17) family.

It catalyses the reaction NAD(+) + H2O = ADP-D-ribose + nicotinamide + H(+). In terms of biological role, may play a role in vesicle trafficking. This chain is Vesicle-associated protein 1-4 (PVA14), found in Arabidopsis thaliana (Mouse-ear cress).